The sequence spans 306 residues: Pyridoxal 5'-phosphate synthase subunit PdxS (306 aa).

Aspartate 36 provides a ligand contact to D-ribose 5-phosphate. Lysine 93 (schiff-base intermediate with D-ribose 5-phosphate) is an active-site residue. Glycine 165 is a binding site for D-ribose 5-phosphate. Arginine 177 lines the D-glyceraldehyde 3-phosphate pocket. D-ribose 5-phosphate is bound by residues glycine 226 and 247–248 (GS).

Belongs to the PdxS/SNZ family. As to quaternary structure, in the presence of PdxT, forms a dodecamer of heterodimers.

It catalyses the reaction aldehydo-D-ribose 5-phosphate + D-glyceraldehyde 3-phosphate + L-glutamine = pyridoxal 5'-phosphate + L-glutamate + phosphate + 3 H2O + H(+). Its pathway is cofactor biosynthesis; pyridoxal 5'-phosphate biosynthesis. Its function is as follows. Catalyzes the formation of pyridoxal 5'-phosphate from ribose 5-phosphate (RBP), glyceraldehyde 3-phosphate (G3P) and ammonia. The ammonia is provided by the PdxT subunit. Can also use ribulose 5-phosphate and dihydroxyacetone phosphate as substrates, resulting from enzyme-catalyzed isomerization of RBP and G3P, respectively. The sequence is that of Pyridoxal 5'-phosphate synthase subunit PdxS from Corynebacterium urealyticum (strain ATCC 43042 / DSM 7109).